The primary structure comprises 296 residues: MTVQEMILTLQKFWAEQGCLTMQAYDVEKGAGTMNPMTFLRSLGPEPWNVCYTEPSRRPADGRYGENPNRLYQHHQFQVIMKPSPDNIQELYLQSLELLGINPLEHDIRFVEDNWENPTFGAAGLGWEVWLNGMEITQFTYFQQVGGIECNPIAVEITYGIERLASYIQDVESVFDLVWTDGFKYGDIFYQPEFEHSKYTFETSDVDLLFTLFDQYEKEANRALDENLVFPAYDYILKCSHTFNLLDAKGAISVTERTGFIHRVRNMSRRCAQSFIEERERLGFPLIKSKAGESHA.

The protein belongs to the class-II aminoacyl-tRNA synthetase family. In terms of assembly, tetramer of two alpha and two beta subunits.

The protein localises to the cytoplasm. It catalyses the reaction tRNA(Gly) + glycine + ATP = glycyl-tRNA(Gly) + AMP + diphosphate. The sequence is that of Glycine--tRNA ligase alpha subunit from Exiguobacterium sibiricum (strain DSM 17290 / CCUG 55495 / CIP 109462 / JCM 13490 / 255-15).